Consider the following 514-residue polypeptide: Ras-GEF domain-containing family member 1B-A (514 aa).

The region spanning 76 to 206 (HDNNLISGSL…MTQTLIRKLT (131 aa)) is the N-terminal Ras-GEF domain. The Ras-GEF domain occupies 246-494 (DPFTLAQQLT…YLASYESEGP (249 aa)).

In terms of tissue distribution, detected in oocytes, and in embryos at 4 to 120 hours post-fertilization (hpf). Detected along marginal blastomeres at early epiboly stage and throughout the margin at the onset of gastrulation. At 60% epiboly, strongest expression is found in the dorsal shield region and is restricted to the epiblast. Detected in the anterior border of the presomitic mesoderm at the end of epiboly. Detected in adaxial cells, in the somites and in the nervous system during somitogenesis. Detected in diencephalon and hindbrain and in cells surrounding the notochord, including adaxial cells and ventral mesendoderm, in 15-somite stage embryos. At 48 hpf, detected mainly in the brain.

Guanine nucleotide exchange factor (GEF) for Ras family proteins (in vitro). The sequence is that of Ras-GEF domain-containing family member 1B-A (rasgef1ba) from Danio rerio (Zebrafish).